The sequence spans 872 residues: MSNVTPMMQQYLKIKSEYQDCLLFFRLGDFYEMFYEDAKEASRVLEITLTKRDAKKENPIPMCGVPYHSADSYIDTLVNNGYKVAICEQMEDPKQTKGMVRREVVRIVTPGTVMEQGGVDDKQNNYILSFVMNQPEIALSYCDVSTGELKVTHFNDEATLLNEITTINPNEVVINDNISDNLKRQINMVTETITVRETLSSEIYSVNQTEHKLMYQATQLLLDYIHHTQKRDLSHIEDVVQYAAIDYMKMDFYAKRNLELTESIRLKSKKGTLLWLMDETKTPMGARRLKQWIDRPLISKEQIEARLDIVDEFSAHFIERDTLRTYLNQVYDIERLVGRVSYGNVNARDLIQLKHSISEIPNIKALLNSMNQNTLVQVNQLEPLDDLLDILEQSLVEEPPISVKDGGLFKVGFNTQLDEYLEASKNGKTWLAELQAKERQRTGIKSLKISFNKVFGYFIEITRANLQNFEPSEFGYMRKQTLSNAERFITDELKEKEDIILGAEDKAIELEYQLFVQLREEVKKYTERLQQQAKIISELDCLQSFAEIAQKYNYTRPSFSENKTLELVESRHPVVERVMDYNDYVPNNCRLDNETFIYLITGPNMSGKSTYMRQVAIISIMAQMGAYVPCKEAVLPIFDQIFTRIGAADDLVSGKSTFMVEMLEAQKALTYATEDSLIIFDEIGRGTSTYDGLALAQAMIEYVAETSHAKTLFSTHYHELTTLDQALPSLKNVHVAANEYKGELIFLHKVKDGAVDDSYGIQVAKLADLPEKVISRAQVILSEFEASAGKKSSISNLKMVENEPEINQENLNLSVEETTDTLSQKDFEQASFDLFENDQESEIELQIKNLNLSNMTPIEALVKLSELQNQLK.

602–609 (GPNMSGKS) provides a ligand contact to ATP.

Belongs to the DNA mismatch repair MutS family.

Functionally, this protein is involved in the repair of mismatches in DNA. It is possible that it carries out the mismatch recognition step. This protein has a weak ATPase activity. The polypeptide is DNA mismatch repair protein MutS (Staphylococcus aureus (strain Mu3 / ATCC 700698)).